Consider the following 483-residue polypeptide: UDP-N-acetylmuramoyl-L-alanyl-D-glutamate--2,6-diaminopimelate ligase (483 aa).

S29 contributes to the UDP-N-acetyl-alpha-D-muramoyl-L-alanyl-D-glutamate binding site. 107–113 contacts ATP; that stretch reads GTSGKTS. UDP-N-acetyl-alpha-D-muramoyl-L-alanyl-D-glutamate contacts are provided by residues 149 to 150, S176, Q182, and R184; that span reads TT. An N6-carboxylysine modification is found at K216. Meso-2,6-diaminopimelate-binding positions include R380, 404-407, G452, and E456; that span reads DNPR. The Meso-diaminopimelate recognition motif signature appears at 404-407; that stretch reads DNPR.

Belongs to the MurCDEF family. MurE subfamily. Requires Mg(2+) as cofactor. In terms of processing, carboxylation is probably crucial for Mg(2+) binding and, consequently, for the gamma-phosphate positioning of ATP.

The protein resides in the cytoplasm. It catalyses the reaction UDP-N-acetyl-alpha-D-muramoyl-L-alanyl-D-glutamate + meso-2,6-diaminopimelate + ATP = UDP-N-acetyl-alpha-D-muramoyl-L-alanyl-gamma-D-glutamyl-meso-2,6-diaminopimelate + ADP + phosphate + H(+). The protein operates within cell wall biogenesis; peptidoglycan biosynthesis. In terms of biological role, catalyzes the addition of meso-diaminopimelic acid to the nucleotide precursor UDP-N-acetylmuramoyl-L-alanyl-D-glutamate (UMAG) in the biosynthesis of bacterial cell-wall peptidoglycan. The sequence is that of UDP-N-acetylmuramoyl-L-alanyl-D-glutamate--2,6-diaminopimelate ligase from Chelativorans sp. (strain BNC1).